The following is a 169-amino-acid chain: Ribosome maturation factor RimM (169 aa).

Positions 97-169 (EDEYYWADLV…TITADWGLDY (73 aa)) constitute a PRC barrel domain.

This sequence belongs to the RimM family. Binds ribosomal protein uS19.

It is found in the cytoplasm. In terms of biological role, an accessory protein needed during the final step in the assembly of 30S ribosomal subunit, possibly for assembly of the head region. Essential for efficient processing of 16S rRNA. May be needed both before and after RbfA during the maturation of 16S rRNA. It has affinity for free ribosomal 30S subunits but not for 70S ribosomes. The chain is Ribosome maturation factor RimM from Neisseria gonorrhoeae (strain ATCC 700825 / FA 1090).